A 498-amino-acid chain; its full sequence is Cytochrome P450 monooxygenase idtP (498 aa).

The N-terminal stretch at 1-20 (MFLLHILAIGACLLWYFVRS) is a signal peptide. Cys439 contributes to the heme binding site.

It belongs to the cytochrome P450 family. Heme is required as a cofactor.

It participates in secondary metabolite biosynthesis. Functionally, cytochrome P450 monooxygenase; part of the gene cluster that mediates the biosynthesis of paspalitrems, indole-diterpene (IDT) mycotoxins that are potent tremorgens in mammals. The geranylgeranyl diphosphate (GGPP) synthase idtG is proposed to catalyze the first step in IDT biosynthesis via catalysis of a series of iterative condensations of isopentenyl diphosphate (IPP) with dimethylallyl diphosphate (DMAPP), geranyl diphosphate (GPP), and farnesyl diphosphate (FPP), to form GGPP. Condensation of indole-3-glycerol phosphate with GGPP by the prenyltransferase idtC then forms 3-geranylgeranylindole (3-GGI). Epoxidation of the two terminal alkenes of the geranylgeranyl moiety by the FAD-dependent monooxygenase idtM, and cyclization by the terpene cyclase idtB then leads to the production of paspaline. The cytochrome P450 monooxygenase idtP then catalyzes oxidative elimination of the pendant methyl group at C-12 of paspaline and generates the C-10 ketone to yield 13-desoxypaxilline. The cytochrome P450 monooxygenase idtQ may catalyze the C-13 oxidation of 13-desoxypaxilline to afford paxilline. Considering that both paspalicine and paxilline were detected in C.paspali, idtQ also catalyzes the formation of paspalinine from 13-desoxypaxilline via paspalicine as an intermediate. Finally, the alpha-prenyltransferase idtF prenylates paspalinine at the C-20 or the C-21 positions to yield paspalitrems A and C, respectively. The hydroxylation of paspalitrem A at C-32 by a still unknown oxidase affords paspalitrem B. The protein is Cytochrome P450 monooxygenase idtP of Claviceps paspali (Rye ergot fungus).